The primary structure comprises 394 residues: S-adenosylmethionine synthase 1 (394 aa).

Residue E11 participates in Mg(2+) binding. H17 contributes to the ATP binding site. E45 is a binding site for K(+). 2 residues coordinate L-methionine: E58 and Q101. Residues 169 to 171 (DGK), 237 to 240 (SGRF), D248, 254 to 255 (RK), A271, K275, and K279 contribute to the ATP site. D248 is a binding site for L-methionine. K279 serves as a coordination point for L-methionine.

The protein belongs to the AdoMet synthase family. In terms of assembly, homotetramer. Mn(2+) serves as cofactor. It depends on Mg(2+) as a cofactor. The cofactor is Co(2+). K(+) is required as a cofactor.

It localises to the cytoplasm. It catalyses the reaction L-methionine + ATP + H2O = S-adenosyl-L-methionine + phosphate + diphosphate. Its pathway is amino-acid biosynthesis; S-adenosyl-L-methionine biosynthesis; S-adenosyl-L-methionine from L-methionine: step 1/1. Functionally, catalyzes the formation of S-adenosylmethionine from methionine and ATP. The reaction comprises two steps that are both catalyzed by the same enzyme: formation of S-adenosylmethionine (AdoMet) and triphosphate, and subsequent hydrolysis of the triphosphate. The sequence is that of S-adenosylmethionine synthase 1 (SAMS1) from Triticum monococcum (Einkorn wheat).